Reading from the N-terminus, the 492-residue chain is Glycerol kinase 1 (492 aa).

Thr10 is an ADP binding site. ATP is bound by residues Thr10 and Ser11. Thr10 contacts sn-glycerol 3-phosphate. Lys14 contacts ADP. Arg80, Glu81, Tyr132, and Asp241 together coordinate sn-glycerol 3-phosphate. The glycerol site is built by Arg80, Glu81, Tyr132, and Asp241. Thr263, Gly306, Gly407, and Asn411 together coordinate ADP. Residues Thr263, Gly306, and Gly407 each contribute to the ATP site.

It belongs to the FGGY kinase family.

The catalysed reaction is glycerol + ATP = sn-glycerol 3-phosphate + ADP + H(+). The protein operates within polyol metabolism; glycerol degradation via glycerol kinase pathway; sn-glycerol 3-phosphate from glycerol: step 1/1. Inhibited by fructose 1,6-bisphosphate (FBP). Functionally, key enzyme in the regulation of glycerol uptake and metabolism. Catalyzes the phosphorylation of glycerol to yield sn-glycerol 3-phosphate. The chain is Glycerol kinase 1 from Thermotoga maritima (strain ATCC 43589 / DSM 3109 / JCM 10099 / NBRC 100826 / MSB8).